The primary structure comprises 581 residues: ATP-dependent RNA helicase DBP3 (581 aa).

Residues 1–118 (MAATKHSLAD…ASSNSEAPSS (118 aa)) form a disordered region. Basic and acidic residues-rich tracts occupy residues 7-35 (SLADSEDRPTKKTKVDSEEKARLKAEKRE) and 53-62 (DADRAAEKER). The span at 63–73 (KKAKKAKKLEK) shows a compositional bias: basic residues. Low complexity-rich tracts occupy residues 80-89 (AEASAEPAAE) and 106-118 (TTEASSNSEAPSS). A Q motif motif is present at residues 160 to 189 (LEFHQLPATNLLEKKPSPFANYKAPTPIQS). One can recognise a Helicase ATP-binding domain in the interval 192–365 (WPFTLSGRDV…ATFMVSPVKI (174 aa)). Residue 205 to 212 (AETGSGKT) participates in ATP binding. A DEAD box motif is present at residues 311–314 (DEAD). Residues 402–551 (RLLEVLKEHQ…PVPEDLLKFG (150 aa)) enclose the Helicase C-terminal domain.

The protein belongs to the DEAD box helicase family. DDX5/DBP2 subfamily.

It is found in the nucleus. Its subcellular location is the nucleolus. The enzyme catalyses ATP + H2O = ADP + phosphate + H(+). In terms of biological role, ATP-dependent RNA helicase required for 60S ribosomal subunit synthesis. Involved in efficient pre-rRNA processing, predominantly at site A3, which is necessary for the normal formation of 25S and 5.8S rRNAs. This is ATP-dependent RNA helicase DBP3 (DBP3) from Gibberella zeae (strain ATCC MYA-4620 / CBS 123657 / FGSC 9075 / NRRL 31084 / PH-1) (Wheat head blight fungus).